The primary structure comprises 543 residues: Chaperonin GroEL (543 aa).

ATP contacts are provided by residues 30–33 (TLGP), Lys51, 87–91 (DGTTT), Gly415, 480–482 (DAA), and Asp496.

Belongs to the chaperonin (HSP60) family. Forms a cylinder of 14 subunits composed of two heptameric rings stacked back-to-back. Interacts with the co-chaperonin GroES.

It localises to the cytoplasm. It carries out the reaction ATP + H2O + a folded polypeptide = ADP + phosphate + an unfolded polypeptide.. In terms of biological role, together with its co-chaperonin GroES, plays an essential role in assisting protein folding. The GroEL-GroES system forms a nano-cage that allows encapsulation of the non-native substrate proteins and provides a physical environment optimized to promote and accelerate protein folding. The polypeptide is Chaperonin GroEL (Hydrogenobaculum sp. (strain Y04AAS1)).